The following is a 484-amino-acid chain: Probable cobyric acid synthase (484 aa).

The 187-residue stretch at 247–433 (ELHIQIVKLP…LHGIFHNFAF (187 aa)) folds into the GATase cobBQ-type domain. The active-site Nucleophile is C325. Residue H425 is part of the active site.

The protein belongs to the CobB/CobQ family. CobQ subfamily.

It participates in cofactor biosynthesis; adenosylcobalamin biosynthesis. In terms of biological role, catalyzes amidations at positions B, D, E, and G on adenosylcobyrinic A,C-diamide. NH(2) groups are provided by glutamine, and one molecule of ATP is hydrogenolyzed for each amidation. The chain is Probable cobyric acid synthase from Thermococcus onnurineus (strain NA1).